The sequence spans 527 residues: Phosphoenolpyruvate carboxykinase (ATP) (527 aa).

The substrate site is built by R56, Y192, and K198. ATP-binding positions include K198, H217, and 233–241 (GLSGTGKTT). Mn(2+)-binding residues include K198 and H217. D254 is a Mn(2+) binding site. Positions 282, 319, and 444 each coordinate ATP. R319 contributes to the substrate binding site.

This sequence belongs to the phosphoenolpyruvate carboxykinase (ATP) family. Mn(2+) serves as cofactor.

The protein resides in the cytoplasm. It carries out the reaction oxaloacetate + ATP = phosphoenolpyruvate + ADP + CO2. It participates in carbohydrate biosynthesis; gluconeogenesis. Involved in the gluconeogenesis. Catalyzes the conversion of oxaloacetate (OAA) to phosphoenolpyruvate (PEP) through direct phosphoryl transfer between the nucleoside triphosphate and OAA. The chain is Phosphoenolpyruvate carboxykinase (ATP) from Bacillus subtilis (strain 168).